The sequence spans 259 residues: Flap endonuclease Xni (259 aa).

D109 is a Mg(2+) binding site. One can recognise a 5'-3' exonuclease domain in the interval 165-255 (LKPEQLADYW…FNLQDIRYEK (91 aa)). K(+) contacts are provided by L176, A177, I187, and V190. The tract at residues 189 to 194 (GVGPKA) is interaction with DNA.

It belongs to the Xni family. It depends on Mg(2+) as a cofactor. Requires K(+) as cofactor.

In terms of biological role, has flap endonuclease activity. During DNA replication, flap endonucleases cleave the 5'-overhanging flap structure that is generated by displacement synthesis when DNA polymerase encounters the 5'-end of a downstream Okazaki fragment. This chain is Flap endonuclease Xni, found in Aliivibrio fischeri (strain ATCC 700601 / ES114) (Vibrio fischeri).